The chain runs to 303 residues: MESALPSILTLVIIAEFIIGNLSNGFIVLINYIDWVSKRELSSVDKLLIILAISRIGLIWEILVSWFLALHYLAIFVSGTGLRIMIFSWIVSNHFSLWLATILSIFYLLKIASFSSPAFLYLKWRVNKVILMILLGSLVFLFLNLIQINIHIKDWLDRYEGNTTWNFSMSDFVTFSVSVKFTMTMFSLTPFTVALISFSLLIFSLQKHLQKMQLNYKGHREPRTKVHTNALKIVISFLLLYASFFLCILISWISELYQNTAIYMLCETIGLFYPSSHSFLLILGNPKLRQAFLLVAAKVWAKR.

The Extracellular portion of the chain corresponds to 1–7; sequence MESALPS. Residues 8–28 form a helical membrane-spanning segment; that stretch reads ILTLVIIAEFIIGNLSNGFIV. Residues 29 to 55 are Cytoplasmic-facing; it reads LINYIDWVSKRELSSVDKLLIILAISR. The chain crosses the membrane as a helical span at residues 56–76; the sequence is IGLIWEILVSWFLALHYLAIF. At 77 to 85 the chain is on the extracellular side; that stretch reads VSGTGLRIM. Residues 86-106 traverse the membrane as a helical segment; it reads IFSWIVSNHFSLWLATILSIF. Residues 107-128 are Cytoplasmic-facing; that stretch reads YLLKIASFSSPAFLYLKWRVNK. Residues 129 to 149 traverse the membrane as a helical segment; that stretch reads VILMILLGSLVFLFLNLIQIN. Over 150–184 the chain is Extracellular; it reads IHIKDWLDRYEGNTTWNFSMSDFVTFSVSVKFTMT. Residues Asn-162 and Asn-166 are each glycosylated (N-linked (GlcNAc...) asparagine). Residues 185–205 traverse the membrane as a helical segment; sequence MFSLTPFTVALISFSLLIFSL. Over 206–232 the chain is Cytoplasmic; it reads QKHLQKMQLNYKGHREPRTKVHTNALK. A helical transmembrane segment spans residues 233 to 253; that stretch reads IVISFLLLYASFFLCILISWI. At 254–261 the chain is on the extracellular side; it reads SELYQNTA. Residues 262–282 form a helical membrane-spanning segment; sequence IYMLCETIGLFYPSSHSFLLI. The Cytoplasmic portion of the chain corresponds to 283-303; the sequence is LGNPKLRQAFLLVAAKVWAKR.

The protein belongs to the G-protein coupled receptor T2R family.

It localises to the membrane. Its function is as follows. Receptor that may play a role in the perception of bitterness and is gustducin-linked. May play a role in sensing the chemical composition of the gastrointestinal content. The activity of this receptor may stimulate alpha gustducin, mediate PLC-beta-2 activation and lead to the gating of TRPM5. The sequence is that of Taste receptor type 2 member 13 (TAS2R13) from Pongo pygmaeus (Bornean orangutan).